The following is a 106-amino-acid chain: UPF0060 membrane protein Rleg2_1018 (106 aa).

A run of 4 helical transmembrane segments spans residues 4-24, 30-50, 58-78, and 86-106; these read IIYA…WAWL, VWWL…LTLV, TFAA…WLVE, and DIGG…GPRG.

It belongs to the UPF0060 family.

The protein localises to the cell inner membrane. This is UPF0060 membrane protein Rleg2_1018 from Rhizobium leguminosarum bv. trifolii (strain WSM2304).